The primary structure comprises 693 residues: Polyribonucleotide nucleotidyltransferase (693 aa).

Mg(2+) is bound by residues aspartate 489 and aspartate 495. The region spanning 556 to 615 (PQIHVMNINPAKIKDVVGRGGATVKGIVEKTGAQIDTSDSGEVKVFAKDKKSMDMAVAMI) is the KH domain. In terms of domain architecture, S1 motif spans 625–693 (GQVYKGKIVK…GRVKLSLVAR (69 aa)).

This sequence belongs to the polyribonucleotide nucleotidyltransferase family. In terms of assembly, component of the RNA degradosome, which is a multiprotein complex involved in RNA processing and mRNA degradation. It depends on Mg(2+) as a cofactor.

It localises to the cytoplasm. It carries out the reaction RNA(n+1) + phosphate = RNA(n) + a ribonucleoside 5'-diphosphate. Functionally, involved in mRNA degradation. Catalyzes the phosphorolysis of single-stranded polyribonucleotides processively in the 3'- to 5'-direction. The chain is Polyribonucleotide nucleotidyltransferase from Francisella tularensis subsp. holarctica (strain FTNF002-00 / FTA).